Reading from the N-terminus, the 587-residue chain is Bifunctional lycopene cyclase/phytoene synthase (587 aa).

The segment at 1 to 242 (MGYDYALVHV…IVFGIAAFDK (242 aa)) is lycopene beta-cyclase. Transmembrane regions (helical) follow at residues 8 to 28 (VHVKYTIPLAALLTVFSYPVF), 35 to 55 (RTLFIVTIAFVATIPWDSYLI), 77 to 97 (AEELFFFIIQTYITAQLYIIL), 120 to 140 (GKLVGQLALSGSVLLGTWLIA), 150 to 170 (LILVWACTFALFTWTITAHFL), 172 to 192 (ALPLACTALPILLPTVYLWIV), and 220 to 240 (IEEATFFLVTNMLIVFGIAAF). The segment at 249 to 587 (AFPEKFDKPA…WVAWSTLMAA (339 aa)) is phytoene synthase.

The protein in the N-terminal section; belongs to the lycopene beta-cyclase family. In the C-terminal section; belongs to the phytoene/squalene synthase family.

It is found in the membrane. The catalysed reaction is all-trans-lycopene = gamma-carotene. The enzyme catalyses gamma-carotene = all-trans-beta-carotene. It carries out the reaction 2 (2E,6E,10E)-geranylgeranyl diphosphate = 15-cis-phytoene + 2 diphosphate. Its pathway is carotenoid biosynthesis; beta-carotene biosynthesis. It participates in carotenoid biosynthesis; phytoene biosynthesis; all-trans-phytoene from geranylgeranyl diphosphate: step 1/1. In terms of biological role, bifunctional enzyme that catalyzes the reactions from geranylgeranyl diphosphate to phytoene (phytoene synthase) and lycopene to beta-carotene via the intermediate gamma-carotene (lycopene cyclase). This is Bifunctional lycopene cyclase/phytoene synthase from Colletotrichum graminicola (strain M1.001 / M2 / FGSC 10212) (Maize anthracnose fungus).